The sequence spans 342 residues: Trans-enoyl reductase himH (342 aa).

Threonine 46–lysine 49 contacts NADP(+). Position 133–140 (leucine 133–serine 140) interacts with substrate. NADP(+) contacts are provided by residues serine 168–valine 171, serine 191–asparagine 194, valine 255–methionine 256, and valine 329–serine 330.

The protein belongs to the zinc-containing alcohol dehydrogenase family. As to quaternary structure, monomer.

The protein operates within secondary metabolite biosynthesis. Functionally, trans-enoyl reductase; part of the him gene cluster that mediates the biosynthesis of himeic acid A, a ubiquitin-activating enzyme (E1) inhibitor. First, himA, together with the trans-enoyl reductase himH, catalyzes the formation of apolyketide chain, which is then condensed with leucine by the NRPS activity of himA. Dieckmann cyclization and release from himA gives a tetramic acid intermediate as the product of himA PKS-NRPS. HimG then catalyzes alpha-oxidation of the tetramic acid ring, with a subsequent rearrangement to yield apyrone intermediate. Two terminal methyl groups of polyketide and amide side chains are oxidized to carboxylic acids by himC cytochrome P450 monooxygenase to form himeic acid A. Himeic acid A is further converted to himeic acid B and C during culture growth. No gene responsible for pyrone to pyridone conversion was found in the him gene cluster and himeic acid A is non-enzymatically converted to himeic acid C by the incorporation of an ammonium nitrogen atom in a pH5 buffer, and to himeic acid B at a conversion ratio of 50% during incubation in MeOH for 5 days. This Aspergillus japonicus protein is Trans-enoyl reductase himH.